The following is a 96-amino-acid chain: MNPAVWLDGEDVVLRLYIQPKASRDKILGLHGDELKIAITAPPVDGKANGHLTKLLGKWFKVAKSLVTIEKGELGRHKQVRVHTPQQIPDEVKAIL.

Belongs to the UPF0235 family.

The sequence is that of UPF0235 protein VV2877 from Vibrio vulnificus (strain YJ016).